The following is a 476-amino-acid chain: Variant surface glycoprotein MITAT 1.2 (476 aa).

The first 26 residues, 1-26, serve as a signal peptide directing secretion; it reads MPSNQEARLFLAVLVLAQVLPILVDS. 2 cysteine pairs are disulfide-bonded: C41–C171 and C149–C213. A glycan (N-linked (GlcNAc...) asparagine) is linked at N289. Disordered regions lie at residues 389 to 418 and 435 to 459; these read QKHK…CKSP and EEAK…TGSS. Intrachain disulfides connect C407-C419 and C415-C430. A compositionally biased stretch (basic and acidic residues) spans 435-449; it reads EEAKKVADETAKDGK. Positions 450 to 459 are enriched in low complexity; that stretch reads TGNTNTTGSS. N454 carries N-linked (GlcNAc...) asparagine glycosylation. A lipid anchor (GPI-anchor amidated serine) is attached at S459. The propeptide at 460–476 is removed in mature form; sequence NSFVISKTPLWLAVLLF.

Homodimer.

It localises to the cell membrane. VSG forms a coat on the surface of the parasite. The trypanosome evades the immune response of the host by expressing a series of antigenically distinct VSGs from an estimated 1000 VSG genes. The protein is Variant surface glycoprotein MITAT 1.2 of Trypanosoma brucei brucei.